We begin with the raw amino-acid sequence, 565 residues long: NAD-dependent malic enzyme (565 aa).

The active-site Proton donor is the tyrosine 104. Residue arginine 157 participates in NAD(+) binding. The Proton acceptor role is filled by lysine 175. A divalent metal cation contacts are provided by glutamate 246, aspartate 247, and aspartate 270. The NAD(+) site is built by aspartate 270 and asparagine 418.

This sequence belongs to the malic enzymes family. In terms of assembly, homotetramer. Mg(2+) is required as a cofactor. The cofactor is Mn(2+).

It catalyses the reaction (S)-malate + NAD(+) = pyruvate + CO2 + NADH. The catalysed reaction is oxaloacetate + H(+) = pyruvate + CO2. The protein is NAD-dependent malic enzyme of Salmonella heidelberg (strain SL476).